The primary structure comprises 424 residues: Zinc metalloproteinase-disintegrin-like brevilysin H2a (424 aa).

Residue Gln1 is modified to Pyrrolidone carboxylic acid. Residues 9–207 (RYVKLAIVAD…YKPQCILNEP (199 aa)) form the Peptidase M12B domain. Asn69 carries N-linked (GlcNAc...) asparagine glycosylation. Residue Asp96 coordinates Ca(2+). Cystine bridges form between Cys120-Cys202, Cys164-Cys186, and Cys166-Cys169. Zn(2+) is bound at residue His145. Residue Glu146 is part of the active site. Residues His149 and His155 each coordinate Zn(2+). Asn185 carries an N-linked (GlcNAc...) asparagine glycan. The Ca(2+) site is built by Cys202, Asn205, Val217, Asn220, Leu222, Glu224, Glu227, and Asp230. The Disintegrin domain maps to 215–301 (PPVCGNELLE…DCPTDDLQRN (87 aa)). 14 cysteine pairs are disulfide-bonded: Cys218-Cys247, Cys229-Cys242, Cys231-Cys237, Cys241-Cys264, Cys255-Cys261, Cys260-Cys286, Cys273-Cys293, Cys280-Cys312, Cys305-Cys317, Cys324-Cys374, Cys339-Cys385, Cys352-Cys362, Cys369-Cys411, and Cys405-Cys417. Residues 279–281 (DCD) carry the D/ECD-tripeptide motif. The Ca(2+) site is built by Asp281, Glu284, and Asp296. N-linked (GlcNAc...) asparagine glycosylation occurs at Asn331.

This sequence belongs to the venom metalloproteinase (M12B) family. P-III subfamily. P-IIIa sub-subfamily. In terms of assembly, monomer. Requires Zn(2+) as cofactor. Glycosylated. In terms of tissue distribution, expressed by the venom gland.

It is found in the secreted. Its proteolytic activity is inhibited by EDTA, TPEN, 1,10-phenanthroline, and some thiol compounds, but is enhanced by alkaline earth metal ions (Mg2+, Ca2+, Sr2+, and Ba2+). Its activity is not modulated by urea (4 M). Its function is as follows. Non-hemorrhagic metalloproteinase that degrades fibrinogen. The alpha chain (FGA) is rapidly degraded, the beta chain (FGB) is degraded very slowly, while the gamma chain is left intact. Shows a prefential cleavage at X-Leu bonds. Cleaves insulin B chain at '29-His-|-Leu-30', '33-Ser-|-His-34', '38-Ala-|-Leu-39' and '40-Tyr-|-Leu-41' bonds. This chain is Zinc metalloproteinase-disintegrin-like brevilysin H2a, found in Gloydius brevicauda (Korean slamosa snake).